Here is a 427-residue protein sequence, read N- to C-terminus: 5-hydroxybenzimidazole synthase BzaB (427 aa).

This sequence belongs to the ThiC family. 5-hydroxybenzimidazole synthase subfamily. [4Fe-4S] cluster is required as a cofactor.

The enzyme catalyses 5-amino-1-(5-phospho-beta-D-ribosyl)imidazole + AH2 + S-adenosyl-L-methionine = 5-hydroxybenzimidazole + 5'-deoxyadenosine + formate + L-methionine + A + NH4(+) + phosphate + 2 H(+). The protein operates within cofactor biosynthesis; adenosylcobalamin biosynthesis. Its function is as follows. Together with BzaA, catalyzes the conversion of aminoimidazole ribotide (AIR) to 5-hydroxybenzimidazole (5-HBI) in a radical S-adenosyl-L-methionine (SAM)-dependent reaction. Is thus involved in the anaerobic biosynthesis of dimethylbenzimidazole (DMB), the lower axial ligand of vitamin B12 (cobalamin). Requires BzaA for catalytic activity, as BzaB alone displays no activity. This Eubacterium limosum protein is 5-hydroxybenzimidazole synthase BzaB.